The following is a 308-amino-acid chain: Elongation factor Ts (308 aa).

Residues Thr80 to Val83 are involved in Mg(2+) ion dislocation from EF-Tu.

It belongs to the EF-Ts family.

It localises to the cytoplasm. Its function is as follows. Associates with the EF-Tu.GDP complex and induces the exchange of GDP to GTP. It remains bound to the aminoacyl-tRNA.EF-Tu.GTP complex up to the GTP hydrolysis stage on the ribosome. This is Elongation factor Ts from Agrobacterium fabrum (strain C58 / ATCC 33970) (Agrobacterium tumefaciens (strain C58)).